The chain runs to 80 residues: Small ribosomal subunit protein bS16 (80 aa).

Belongs to the bacterial ribosomal protein bS16 family.

The chain is Small ribosomal subunit protein bS16 from Blochmanniella pennsylvanica (strain BPEN).